A 457-amino-acid polypeptide reads, in one-letter code: Chromosomal replication initiator protein DnaA (457 aa).

The tract at residues 1–73 (MANNYQTLYD…SKYLSEEFKK (73 aa)) is domain I, interacts with DnaA modulators. The interval 73–108 (KENIVNFEFIIDNEKLLINSNFLIKETNIKNRFNFS) is domain II. The tract at residues 109–331 (DELLRYNFNN…GNLKQICFWA (223 aa)) is domain III, AAA+ region. Residues Gly156, Gly158, Lys159, and Thr160 each contribute to the ATP site. The interval 332-457 (DNDTNKDLII…LQINLIINKF (126 aa)) is domain IV, binds dsDNA.

It belongs to the DnaA family. As to quaternary structure, oligomerizes as a right-handed, spiral filament on DNA at oriC.

The protein localises to the cytoplasm. In terms of biological role, plays an essential role in the initiation and regulation of chromosomal replication. ATP-DnaA binds to the origin of replication (oriC) to initiate formation of the DNA replication initiation complex once per cell cycle. Binds the DnaA box (a 9 base pair repeat at the origin) and separates the double-stranded (ds)DNA. Forms a right-handed helical filament on oriC DNA; dsDNA binds to the exterior of the filament while single-stranded (ss)DNA is stabiized in the filament's interior. The ATP-DnaA-oriC complex binds and stabilizes one strand of the AT-rich DNA unwinding element (DUE), permitting loading of DNA polymerase. After initiation quickly degrades to an ADP-DnaA complex that is not apt for DNA replication. Binds acidic phospholipids. In Ureaplasma parvum serovar 3 (strain ATCC 700970), this protein is Chromosomal replication initiator protein DnaA.